Here is a 7260-residue protein sequence, read N- to C-terminus: Nonribosomal peptide synthetase ecdA (7260 aa).

The Carrier 1 domain maps to 4–80 (TNEMERKRVF…ELFETIQYLQ (77 aa)). Residue Ser41 is modified to O-(pantetheine 4'-phosphoryl)serine. The segment at 134-549 (EDVYPSTPLQ…SINEILTLPA (416 aa)) is condensation 1. The tract at residues 575–965 (QDQVRSQPAA…DGSLLYVGRC (391 aa)) is adenylation 1. In terms of domain architecture, Carrier 2 spans 1090–1166 (APSTAIEHKL…DLARELEGRN (77 aa)). Position 1127 is an O-(pantetheine 4'-phosphoryl)serine (Ser1127). The condensation 2 stretch occupies residues 1208–1628 (EDIIPCTAMQ…LGDLSLLSAD (421 aa)). The adenylation 2 stretch occupies residues 1653–2054 (EEQITARPDS…GRRDTQIKIR (402 aa)). The Carrier 3 domain maps to 2188 to 2264 (TPSTPTESQL…DLANLLSSRF (77 aa)). Residue Ser2225 is modified to O-(pantetheine 4'-phosphoryl)serine. The interval 2314-2719 (QDVYPCTPLQ…THVVQQLCDP (406 aa)) is condensation 3. The tract at residues 2763–3156 (KQALAQPNAP…GRRDTQVKIR (394 aa)) is adenylation 3. The Carrier 4 domain maps to 3287 to 3365 (QPATEMEKML…ELAQVLEERV (79 aa)). Residue Ser3324 is modified to O-(pantetheine 4'-phosphoryl)serine. The condensation 4 stretch occupies residues 3417–3831 (VQDVYPCTPL…LLSPNDQQQI (415 aa)). Residues 3851–4248 (EEQAMAHPTK…SFVYVARRNT (398 aa)) form an adenylation 4 region. In terms of domain architecture, Carrier 5 spans 4394–4471 (APATAMERTL…DLANLLADGA (78 aa)). O-(pantetheine 4'-phosphoryl)serine is present on Ser4431. Positions 4510-4910 (EDIYPATPLQ…HFVHVAEQLF (401 aa)) are condensation 5. Residues 4955–5357 (ERAALQPNAP…GRRDLQVKIR (403 aa)) form an adenylation 5 region. Residues 5496-5573 (APRTVMEQQV…DLALVLSERG (78 aa)) form the Carrier 6 domain. Position 5533 is an O-(pantetheine 4'-phosphoryl)serine (Ser5533). Residues 5622-6043 (EDVYPCTPLQ…AVSEKDERQI (422 aa)) form a condensation 6 region. Residues 6063 to 6460 (QEQVARTPGE…GRHDSQVKIR (398 aa)) are adenylation 6. Residues 6592 to 6668 (APSTAMERQL…EVAQVVEDRV (77 aa)) form the Carrier 7 domain. O-(pantetheine 4'-phosphoryl)serine is present on Ser6629. Residues 6718-7133 (LPTTDFQALT…ILDSPGLLVS (416 aa)) are condensation 7. Positions 7241 to 7260 (CEEAEKSASVTSSERRLATI) are disordered.

The protein belongs to the NRP synthetase family.

It participates in antifungal biosynthesis. In terms of biological role, nonribosomal peptide synthetase; part of the gene cluster that mediates the biosynthesis of echinocandin B, a fungal lipidated cyclic hexapeptide that acts as an antifungal agent. Linoleoyl-AMP, produced by the fatty-acyl-AMP ligase ecdI, is transferred to the initiation carrier domain (T0) of ecdA. The linoleoyl-S-phosphopantetheinyl-T0 is sequentially extended with L-ornithine, L-threonine, L-proline, L-homotyrosine, L-threonine, and 4R-methyl-L-proline to form the linear hexapeptide. Thereafter, the terminal condensation (C7) performs macrocyclization of the NRPS product and the cyclic scaffold is released from ecdA. All six of the amino acid residues are hydroxylated, including 4R,5R-dihydroxy-L-ornithine, 4R-hydroxyl-L-proline, 3S,4S-dihydroxy-L-homotyrosine, and 3S-hydroxyl-4S-methyl-L-prolin. In the pathway, all the hydroxylation reactions are proposed to occur following completion of the cyclic peptide, so the unhydroxylated precursor produced by ecdA will undergo six rounds of hydroxylation. Five hydroxylase genes (ecdG, ecdH, ecdK, htyE and htyF) are embedded within the echinocandin B (ecd) and L-homotyrosine (hty) clusters. This Aspergillus rugulosus (Emericella rugulosa) protein is Nonribosomal peptide synthetase ecdA.